A 359-amino-acid polypeptide reads, in one-letter code: MKLTSLSKNANSTATAVTVSSIQKLPFLSLSETLPCPKSSRKPTFLPLRCRRRPKLDLLWGKFRVRASDAGVGSGSYSGGEEDGSQSSSLDQSPATSSESLKPRGPFPYSLSIALVLLSCGLVFSLITFVKGGPSSVLAAVAKSGFTAAFSLIFVSEIGDKTFFIAALLAMQYEKTLVLLGSMGALSLMTILSVVIGKIFQSVPAQFQTTLPIGEYAAIALLMFFGLKSIKDAWDLPPVEAKNGEETGIELGEYSEAEELVKEKASKKLTNPLEILWKSFSLVFFAEWGDRSMLATVALGAAQSPLGVASGAIAGHLVATVLAIMGGAFLANYISEKLVGYVGGALFLVFAAATFFGVF.

The N-terminal 66 residues, 1–66 (MKLTSLSKNA…DLLWGKFRVR (66 aa)), are a transit peptide targeting the chloroplast. The disordered stretch occupies residues 71-102 (GVGSGSYSGGEEDGSQSSSLDQSPATSSESLK). The segment covering 85–98 (SQSSSLDQSPATSS) has biased composition (low complexity). 7 consecutive transmembrane segments (helical) span residues 110 to 130 (SLSI…ITFV), 149 to 169 (AFSL…AALL), 177 to 197 (LVLL…VVIG), 207 to 227 (FQTT…FFGL), 269 to 289 (LTNP…AEWG), 311 to 331 (GAIA…AFLA), and 339 to 359 (VGYV…FGVF).

The protein belongs to the GDT1 family.

The protein localises to the plastid. It is found in the chloroplast membrane. Functionally, probable chloroplast-localized Mn(2+)/H(+) and/or Ca(2+)/H(+) antiporter regulating Ca(2+), Mn(2+) and pH homeostasis. This is Protein PAM71-homolog, chloroplastic from Arabidopsis thaliana (Mouse-ear cress).